Here is a 372-residue protein sequence, read N- to C-terminus: Meiotic drive suppressor wtf18 (372 aa).

Transmembrane regions (helical) follow at residues 86-106 (FLLR…TAWV), 120-140 (AFSV…FCFF), 153-173 (VTVI…AQCV), 197-217 (DLVV…FGCV), 233-253 (CSIS…IWTL), and 257-277 (LFGL…TKGL).

This sequence belongs to the WTF family. As to quaternary structure, homomer. Interacts with other proteins that exhibit high sequence similarity.

Its subcellular location is the spore membrane. It is found in the vacuole membrane. Functionally, acts as a suppressor component of the dual wtf meiotic drive system, and can suppress but not confer meiotic drive by compatible poisons. Wtf meiotic drive systems promote unequal transmission of alleles from the parental zygote to progeny spores by encoding a poison and an antidote from the same locus; the poison is trans-acting and forms toxic aggregates in all spores within an ascus, wherease the antidote is spore-specific and targets aggregates for degradation by the vacuole. Meiotic drive by wtf systems therefore lead to poisoning of all progeny that do not inherit the dual poison/antidote allele, or express a compatible antidote. In Schizosaccharomyces pombe (strain 972 / ATCC 24843) (Fission yeast), this protein is Meiotic drive suppressor wtf18.